A 146-amino-acid polypeptide reads, in one-letter code: Prefoldin subunit alpha (146 aa).

The protein belongs to the prefoldin alpha subunit family. Heterohexamer of two alpha and four beta subunits.

Its subcellular location is the cytoplasm. In terms of biological role, molecular chaperone capable of stabilizing a range of proteins. Seems to fulfill an ATP-independent, HSP70-like function in archaeal de novo protein folding. The sequence is that of Prefoldin subunit alpha from Methanococcus vannielii (strain ATCC 35089 / DSM 1224 / JCM 13029 / OCM 148 / SB).